The sequence spans 82 residues: UPF0248 protein Mevan_1298 (82 aa).

Belongs to the UPF0248 family.

The sequence is that of UPF0248 protein Mevan_1298 from Methanococcus vannielii (strain ATCC 35089 / DSM 1224 / JCM 13029 / OCM 148 / SB).